We begin with the raw amino-acid sequence, 112 residues long: Small ribosomal subunit protein bS6 (112 aa).

It belongs to the bacterial ribosomal protein bS6 family.

In terms of biological role, binds together with bS18 to 16S ribosomal RNA. In Chlamydia caviae (strain ATCC VR-813 / DSM 19441 / 03DC25 / GPIC) (Chlamydophila caviae), this protein is Small ribosomal subunit protein bS6.